Consider the following 179-residue polypeptide: Large ribosomal subunit protein uL5 (179 aa).

This sequence belongs to the universal ribosomal protein uL5 family. Part of the 50S ribosomal subunit; part of the 5S rRNA/L5/L18/L25 subcomplex. Contacts the 5S rRNA and the P site tRNA. Forms a bridge to the 30S subunit in the 70S ribosome.

This is one of the proteins that bind and probably mediate the attachment of the 5S RNA into the large ribosomal subunit, where it forms part of the central protuberance. In the 70S ribosome it contacts protein S13 of the 30S subunit (bridge B1b), connecting the 2 subunits; this bridge is implicated in subunit movement. Contacts the P site tRNA; the 5S rRNA and some of its associated proteins might help stabilize positioning of ribosome-bound tRNAs. The sequence is that of Large ribosomal subunit protein uL5 from Bacillus cereus (strain G9842).